We begin with the raw amino-acid sequence, 615 residues long: Dihydroxy-acid dehydratase (615 aa).

D85 contributes to the Mg(2+) binding site. [2Fe-2S] cluster is bound at residue C126. 2 residues coordinate Mg(2+): D127 and K128. Position 128 is an N6-carboxylysine (K128). C199 provides a ligand contact to [2Fe-2S] cluster. E495 contributes to the Mg(2+) binding site. Catalysis depends on S521, which acts as the Proton acceptor.

It belongs to the IlvD/Edd family. In terms of assembly, homodimer. The cofactor is [2Fe-2S] cluster. Mg(2+) serves as cofactor.

The catalysed reaction is (2R)-2,3-dihydroxy-3-methylbutanoate = 3-methyl-2-oxobutanoate + H2O. It catalyses the reaction (2R,3R)-2,3-dihydroxy-3-methylpentanoate = (S)-3-methyl-2-oxopentanoate + H2O. Its pathway is amino-acid biosynthesis; L-isoleucine biosynthesis; L-isoleucine from 2-oxobutanoate: step 3/4. It functions in the pathway amino-acid biosynthesis; L-valine biosynthesis; L-valine from pyruvate: step 3/4. Functionally, functions in the biosynthesis of branched-chain amino acids. Catalyzes the dehydration of (2R,3R)-2,3-dihydroxy-3-methylpentanoate (2,3-dihydroxy-3-methylvalerate) into 2-oxo-3-methylpentanoate (2-oxo-3-methylvalerate) and of (2R)-2,3-dihydroxy-3-methylbutanoate (2,3-dihydroxyisovalerate) into 2-oxo-3-methylbutanoate (2-oxoisovalerate), the penultimate precursor to L-isoleucine and L-valine, respectively. This Mannheimia succiniciproducens (strain KCTC 0769BP / MBEL55E) protein is Dihydroxy-acid dehydratase.